A 540-amino-acid chain; its full sequence is T-complex protein 1 subunit alpha (540 aa).

The protein belongs to the TCP-1 chaperonin family. As to quaternary structure, component of the T-complex protein 1 (TCP1) complex.

It localises to the cytoplasm. Molecular chaperone; assists the folding of proteins upon ATP hydrolysis. The sequence is that of T-complex protein 1 subunit alpha (TCP1) from Encephalitozoon cuniculi (strain GB-M1) (Microsporidian parasite).